We begin with the raw amino-acid sequence, 134 residues long: Small ribosomal subunit protein uS8c (134 aa).

Belongs to the universal ribosomal protein uS8 family. In terms of assembly, part of the 30S ribosomal subunit.

Its subcellular location is the plastid. It is found in the chloroplast. In terms of biological role, one of the primary rRNA binding proteins, it binds directly to 16S rRNA central domain where it helps coordinate assembly of the platform of the 30S subunit. The sequence is that of Small ribosomal subunit protein uS8c (rps8) from Cucumis sativus (Cucumber).